The sequence spans 55 residues: ATP synthase F(0) complex subunit 8 (55 aa).

The helical transmembrane segment at Ser7 to Ile24 threads the bilayer.

Belongs to the ATPase protein 8 family. Component of the ATP synthase complex composed at least of ATP5F1A/subunit alpha, ATP5F1B/subunit beta, ATP5MC1/subunit c (homooctomer), MT-ATP6/subunit a, MT-ATP8/subunit 8, ATP5ME/subunit e, ATP5MF/subunit f, ATP5MG/subunit g, ATP5MK/subunit k, ATP5MJ/subunit j, ATP5F1C/subunit gamma, ATP5F1D/subunit delta, ATP5F1E/subunit epsilon, ATP5PF/subunit F6, ATP5PB/subunit b, ATP5PD/subunit d, ATP5PO/subunit OSCP. ATP synthase complex consists of a soluble F(1) head domain (subunits alpha(3) and beta(3)) - the catalytic core - and a membrane F(0) domain - the membrane proton channel (subunits c, a, 8, e, f, g, k and j). These two domains are linked by a central stalk (subunits gamma, delta, and epsilon) rotating inside the F1 region and a stationary peripheral stalk (subunits F6, b, d, and OSCP).

The protein localises to the mitochondrion membrane. Subunit 8, of the mitochondrial membrane ATP synthase complex (F(1)F(0) ATP synthase or Complex V) that produces ATP from ADP in the presence of a proton gradient across the membrane which is generated by electron transport complexes of the respiratory chain. ATP synthase complex consist of a soluble F(1) head domain - the catalytic core - and a membrane F(1) domain - the membrane proton channel. These two domains are linked by a central stalk rotating inside the F(1) region and a stationary peripheral stalk. During catalysis, ATP synthesis in the catalytic domain of F(1) is coupled via a rotary mechanism of the central stalk subunits to proton translocation. In vivo, can only synthesize ATP although its ATP hydrolase activity can be activated artificially in vitro. Part of the complex F(0) domain. This Columbina passerina (Common ground-dove) protein is ATP synthase F(0) complex subunit 8.